The primary structure comprises 122 residues: Large ribosomal subunit protein uL14 (122 aa).

It belongs to the universal ribosomal protein uL14 family. As to quaternary structure, part of the 50S ribosomal subunit. Forms a cluster with proteins L3 and L19. In the 70S ribosome, L14 and L19 interact and together make contacts with the 16S rRNA in bridges B5 and B8.

Binds to 23S rRNA. Forms part of two intersubunit bridges in the 70S ribosome. The polypeptide is Large ribosomal subunit protein uL14 (Leuconostoc citreum (strain KM20)).